Here is a 465-residue protein sequence, read N- to C-terminus: Cysteine--tRNA ligase (465 aa).

Zn(2+) is bound at residue Cys-28. Residues 30–40 (MTVYDYCHLGH) carry the 'HIGH' region motif. Zn(2+)-binding residues include Cys-209, His-234, and Glu-238. The 'KMSKS' region signature appears at 266–270 (KMSKS). Lys-269 contacts ATP.

It belongs to the class-I aminoacyl-tRNA synthetase family. In terms of assembly, monomer. Zn(2+) serves as cofactor.

Its subcellular location is the cytoplasm. It catalyses the reaction tRNA(Cys) + L-cysteine + ATP = L-cysteinyl-tRNA(Cys) + AMP + diphosphate. This chain is Cysteine--tRNA ligase, found in Nitrosomonas europaea (strain ATCC 19718 / CIP 103999 / KCTC 2705 / NBRC 14298).